The following is a 935-amino-acid chain: Protein HIRA (935 aa).

WD repeat units follow at residues 14–58 (HDTG…DKKK), 72–111 (ESQS…NSMG), 131–170 (GHSM…DRIT), 174–213 (DIQL…CVKS), 222–261 (IEET…QTWK), 277–320 (RAMP…KPLF), and 325–362 (IFNH…IGEM). A disordered region spans residues 431–556 (SSDIQLTKSM…RNKKRKVPAT (126 aa)). Residues 439–468 (SMEDNSKENESKNSEKTMMEERNKQIDVRK) show a composition bias toward basic and acidic residues. A compositionally biased stretch (polar residues) spans 480–492 (GTTTADPMTSLSS). Over residues 520–542 (DLEDSSDSDDDDEEEEEDMEISD) the composition is skewed to acidic residues.

It belongs to the WD repeat HIR1 family.

The protein resides in the nucleus. In terms of biological role, required for replication-independent chromatin assembly and for the periodic repression of histone gene transcription during the cell cycle. This chain is Protein HIRA, found in Caenorhabditis elegans.